The following is a 367-amino-acid chain: MSISSKIRPTPRXPSRMATDHSFKMKNFYADPFAISSISLAIVSWVIAIGGSISSASTNESFPRFTWWGIVYQFLIICSLMLFYCFDLVDHYRIFITTSIAVAFVYNTNSATNLVYADGPKKAAASAGVILLSIINLIWILYYGGDNASPTNRWIDSFSIKGIRPSPLENSLHRARRRGNRNTTPYQNNVYNDAIRDSGYATQFDGYPQQQPSHTNYVSSTALAGFENTQPNTSEAVNLHLNXLQQRINSASNAKETNDNSNNQTNTNIGNTFDTDFSNGNTETTMGDTLGLYSDIGDDNFIYKAKALYPYDADDDDAYEISFEQNEILQVSDIEGRWWKARRANGETGIIPSNYVQLIDGPEEMHR.

At 1-32 (MSISSKIRPTPRXPSRMATDHSFKMKNFYADP) the chain is on the cytoplasmic side. The chain crosses the membrane as a helical span at residues 33–53 (FAISSISLAIVSWVIAIGGSI). The Extracellular portion of the chain corresponds to 54-65 (SSASTNESFPRF). N59 is a glycosylation site (N-linked (GlcNAc...) asparagine). Residues 66-86 (TWWGIVYQFLIICSLMLFYCF) traverse the membrane as a helical segment. Topologically, residues 87–93 (DLVDHYR) are cytoplasmic. Residues 94–114 (IFITTSIAVAFVYNTNSATNL) traverse the membrane as a helical segment. At 115–122 (VYADGPKK) the chain is on the extracellular side. A helical membrane pass occupies residues 123–143 (AAASAGVILLSIINLIWILYY). The Cytoplasmic portion of the chain corresponds to 144-367 (GGDNASPTNR…LIDGPEEMHR (224 aa)). S166 is subject to Phosphoserine. A disordered region spans residues 252-276 (SNAKETNDNSNNQTNTNIGNTFDTD). Residues 259-272 (DNSNNQTNTNIGNT) are compositionally biased toward low complexity. The 62-residue stretch at 300–361 (NFIYKAKALY…PSNYVQLIDG (62 aa)) folds into the SH3 domain.

It belongs to the SHO1 family. Forms homooligomers. Interacts (via the SH3 domain) with PBS2. Interacts with FUS1, STE11, STE50 and RNA polymerase II.

The protein resides in the cell membrane. Its subcellular location is the bud. It is found in the bud neck. It localises to the cell projection. Plasma membrane osmosensor that activates the high osmolarity glycerol (HOG) MAPK signaling pathway in response to high osmolarity. Detects changes in external osmolarity and activates PBS2 through the stimulation of STE11 and targets PBS2 to the plasma membrane. PBS2 activation leads to changes in glycerol production that helps to balance the intracellular and external osmotic pressures. Activates also HOG1 in response to heat stress and mediates resistance to oxidative stress. Involved in the regulation of the mating pathway. May be a receptor that feeds into the pseudohyphal growth pathway. The polypeptide is High osmolarity signaling protein SHO1 (SHO1) (Saccharomyces cerevisiae (strain FostersB) (Baker's yeast)).